We begin with the raw amino-acid sequence, 146 residues long: Hemoglobin subunit beta-1 (146 aa).

One can recognise a Globin domain in the interval 2-146; the sequence is EWTDKERAII…VVSALGKQYH (145 aa). Heme b is bound by residues histidine 63 and histidine 92.

It belongs to the globin family. As to quaternary structure, hb 1 is a heterotetramer of two alpha-1 and two beta-1 chains. As to expression, red blood cells.

Involved in oxygen transport from gills to the various peripheral tissues. The polypeptide is Hemoglobin subunit beta-1 (hbb1) (Gobionotothen gibberifrons (Humped rockcod)).